A 321-amino-acid polypeptide reads, in one-letter code: Homoserine O-acetyltransferase (321 aa).

Cysteine 142 (acyl-thioester intermediate) is an active-site residue. Positions 163 and 192 each coordinate substrate. Histidine 235 (proton acceptor) is an active-site residue. Glutamate 237 is an active-site residue. Residue arginine 249 participates in substrate binding.

Belongs to the MetA family.

The protein localises to the cytoplasm. It catalyses the reaction L-homoserine + acetyl-CoA = O-acetyl-L-homoserine + CoA. The protein operates within amino-acid biosynthesis; L-methionine biosynthesis via de novo pathway; O-acetyl-L-homoserine from L-homoserine: step 1/1. Transfers an acetyl group from acetyl-CoA to L-homoserine, forming acetyl-L-homoserine. This is Homoserine O-acetyltransferase from Lactococcus lactis subsp. lactis (strain IL1403) (Streptococcus lactis).